Here is an 88-residue protein sequence, read N- to C-terminus: UPF0335 protein NGR_c28390 (88 aa).

It belongs to the UPF0335 family.

The protein is UPF0335 protein NGR_c28390 of Sinorhizobium fredii (strain NBRC 101917 / NGR234).